The chain runs to 257 residues: Small ribosomal subunit protein uS2 (257 aa).

This sequence belongs to the universal ribosomal protein uS2 family.

This Bartonella henselae (strain ATCC 49882 / DSM 28221 / CCUG 30454 / Houston 1) (Rochalimaea henselae) protein is Small ribosomal subunit protein uS2.